A 273-amino-acid chain; its full sequence is 2,3,4,5-tetrahydropyridine-2,6-dicarboxylate N-succinyltransferase (273 aa).

Substrate-binding residues include R104 and D141.

This sequence belongs to the transferase hexapeptide repeat family. As to quaternary structure, homotrimer.

It is found in the cytoplasm. The catalysed reaction is (S)-2,3,4,5-tetrahydrodipicolinate + succinyl-CoA + H2O = (S)-2-succinylamino-6-oxoheptanedioate + CoA. Its pathway is amino-acid biosynthesis; L-lysine biosynthesis via DAP pathway; LL-2,6-diaminopimelate from (S)-tetrahydrodipicolinate (succinylase route): step 1/3. This Psychrobacter sp. (strain PRwf-1) protein is 2,3,4,5-tetrahydropyridine-2,6-dicarboxylate N-succinyltransferase.